We begin with the raw amino-acid sequence, 264 residues long: Vacuolar protein sorting-associated protein 75 (264 aa).

Phosphoserine is present on Ser3. The disordered stretch occupies residues 223–264 (LEDEEGESGLSADGDSEDDDGSLGEVDLPLSDEEPSSKKRKV).

It belongs to the nucleosome assembly protein (NAP) family. Homodimer. Homotetramer. Forms a complex with RTT109; consisting of a VPS75 dimer contacted by two RTT109 subunits. Interacts with RTT109; the interaction is direct. Interacts with ASF1. Interacts with histone H3/H4 heterodimers and heterotetramers via histone H3.

The protein localises to the nucleus. Functionally, histone chaperone which acts as a cofactor stimulating histone H3 acetylation by RTT109. Preferentially stimulates histone H3 'Lys-9' acetylation by RTT109. May also stimulate histone H3 'Lys-56' acetylation by RTT109. Assembles nucleosomes (in vitro). The sequence is that of Vacuolar protein sorting-associated protein 75 (VPS75) from Saccharomyces cerevisiae (strain ATCC 204508 / S288c) (Baker's yeast).